Consider the following 898-residue polypeptide: Transportin-1 (898 aa).

Residue Met1 is modified to N-acetylmethionine. 20 HEAT repeats span residues 19–46, 51–89, 98–131, 137–174, 181–211, 224–251, 263–290, 306–397, 405–433, 445–472, 486–519, 527–560, 568–606, 614–665, 676–707, 715–748, 756–791, 799–832, 841–872, and 875–895; these read GLQQILQLLKESQSPDTTIQRTVQQKLE, YPDFNNYLIFVLTKLKSEDEPTRSLSGLILKNNVKAHFQ, FIKSECLNNIGDSSPLIRATVGILITTIASKGEL, LLPKLCSLLDSEDYNTCEGAFGALQKICEDSAEILDSD, NIMIPKFLQFFKHSSPKIRSHAVACVNQFII, FIENLFALAGDEEPEVRKNVCRALVMLL, HNIVEYMLQRTQDQDENVALEACEFWLT, PKLI…LANV, HILPLLKELLFHHEWVVKESGILVLGAIA, PELIPHLIQCLSDKKALVRSITCWTLSR, LKPLMTELLKRILDSNKRVQEAACSAFATLEEEA, LAYILDTLVFAFSKYQHKNLLILYDAIGTLADSV, EYIQMLMPPLIQKWNMLKDEDKDLFPLLECLSSVATALQ, EPVY…GLGG, ILTLMYQCMQDKMPEVRQSSFALLGDLTKACF, ADFMPILGTNLNPEFISVCNNATWAIGEISIQMG, PMVLHQLVEIINRPNTPKTLLENTAITIGRLGYVCP, QQFIRPWCTSLRNIRDNEEKDSAFRGICTMISVN, IFFCDAVASWINPKDDLRDMFCKILHGFKNQV, and ENWRRFSDQFPLPLKERLAAF. In terms of domain architecture, Importin N-terminal spans 41 to 109; it reads VQQKLEQLNQ…KSECLNNIGD (69 aa). The interval 347–374 is disordered; that stretch reads FHRSRTVAQQHDEDGIEEEDDDDDEIDD. The span at 360 to 374 shows a compositional bias: acidic residues; sequence DGIEEEDDDDDEIDD.

This sequence belongs to the importin beta family. Importin beta-2 subfamily. Identified in a complex that contains TNPO1, RAN and RANBP1. Binds HNRPA1, HNRPA2, HNRNPDL, RPS7, RPL5 and RAN. Interacts with H2A, H2B, H3 and H4 histones. Interacts with isoform 1 and isoform 5 of ADAR/ADAR1 (via DRBM 3 domain). Interacts with SNAI1 (via zinc fingers); the interaction mediates SNAI1 nuclear import. Interacts with SNAI2 (via zinc fingers). Interacts with RPL23A (via BIB domain) and SRP19; this interaction is involved in RPL23A and SRP19 import into the nucleus. Interacts (via HEAT repeats 8-12) with BAP1 (via non-classical PY-NLS); this interaction is direct, is involved in BAP1 nuclear import and disrupts BAP1 homodimerization. As to quaternary structure, (Microbial infection) Binds to HIV-1 Rev.

The protein resides in the cytoplasm. It localises to the nucleus. Functions in nuclear protein import as nuclear transport receptor. Serves as receptor for nuclear localization signals (NLS) in cargo substrates. May mediate docking of the importin/substrate complex to the nuclear pore complex (NPC) through binding to nucleoporin and the complex is subsequently translocated through the pore by an energy requiring, Ran-dependent mechanism. At the nucleoplasmic side of the NPC, Ran binds to the importin, the importin/substrate complex dissociates and importin is re-exported from the nucleus to the cytoplasm where GTP hydrolysis releases Ran. The directionality of nuclear import is thought to be conferred by an asymmetric distribution of the GTP- and GDP-bound forms of Ran between the cytoplasm and nucleus. Involved in nuclear import of M9-containing proteins. In vitro, binds directly to the M9 region of the heterogeneous nuclear ribonucleoproteins (hnRNP), A1 and A2 and mediates their nuclear import. Involved in hnRNP A1/A2 nuclear export. Mediates the nuclear import of ribosomal proteins RPL23A, RPS7 and RPL5. In vitro, mediates nuclear import of H2A, H2B, H3 and H4 histones. In vitro, mediates nuclear import of SRP19. Mediates nuclear import of ADAR/ADAR1 isoform 1 and isoform 5 in a RanGTP-dependent manner. Main mediator of PR-DUB complex component BAP1 nuclear import; acts redundantly with the karyopherins KPNA1 and KPNA2. In terms of biological role, (Microbial infection) In case of HIV-1 infection, binds and mediates the nuclear import of HIV-1 Rev. This chain is Transportin-1 (TNPO1), found in Homo sapiens (Human).